Consider the following 283-residue polypeptide: Para-Rep C10 (283 aa).

The CRESS-DNA virus Rep endonuclease domain maps to 3–96 (SIRAIHWCFT…IDGPWEYGTW (94 aa)). The RCR-1 motif lies at 10 to 13 (CFTL). Residues Glu36 and His42 each coordinate a divalent metal cation. The short motif at 42-44 (HLQ) is the RCR-2 element. The Nuclear localization signal signature appears at 51 to 71 (KQTTLKKMKELLPGAHLEMAR). Residue Tyr79 is the For DNA cleavage activity of the active site. The short motif at 79-82 (YCQK) is the RCR-3 element. Glu84 is an a divalent metal cation binding site. Residues 96–102 (WISTGSH) carry the Nuclear localization signal motif. 172–180 (GPHGGEGKS) lines the ATP pocket.

The protein belongs to the nanoviridea/circoviridae replication-associated protein family. Homooligomer (Potential). Rep binds to repeated DNA motifs (iterons). Mg(2+) is required as a cofactor. Mn(2+) serves as cofactor.

It localises to the host nucleus. The enzyme catalyses ATP + H2O = ADP + phosphate + H(+). Initiates and terminates the replication only of its own subviral DNA molecule. The closed circular ssDNA genome is first converted to a superhelical dsDNA. Rep binds a specific hairpin at the genome origin of replication. Introduces an endonucleolytic nick within the intergenic region of the genome, thereby initiating the rolling circle replication (RCR). Following cleavage, binds covalently to the 5'-phosphate of DNA as a tyrosyl ester. The cleavage gives rise to a free 3'-OH that serves as a primer for the cellular DNA polymerase. The polymerase synthesizes the (+) strand DNA by rolling circle mechanism. After one round of replication, a Rep-catalyzed nucleotidyl transfer reaction releases a circular single-stranded virus genome, thereby terminating the replication. Displays origin-specific DNA cleavage, nucleotidyl transferase, ATPase and helicase activities. The polypeptide is Para-Rep C10 (C10) (Milk vetch dwarf C10 alphasatellite (MVDC10A)).